Reading from the N-terminus, the 643-residue chain is 1-deoxy-D-xylulose-5-phosphate synthase (643 aa).

Thiamine diphosphate is bound by residues His-79 and 120-122 (AHA). Asp-151 provides a ligand contact to Mg(2+). Thiamine diphosphate is bound by residues 152 to 153 (GS), Asn-180, Tyr-287, and Glu-369. Mg(2+) is bound at residue Asn-180.

This sequence belongs to the transketolase family. DXPS subfamily. In terms of assembly, homodimer. Requires Mg(2+) as cofactor. The cofactor is thiamine diphosphate.

It carries out the reaction D-glyceraldehyde 3-phosphate + pyruvate + H(+) = 1-deoxy-D-xylulose 5-phosphate + CO2. The protein operates within metabolic intermediate biosynthesis; 1-deoxy-D-xylulose 5-phosphate biosynthesis; 1-deoxy-D-xylulose 5-phosphate from D-glyceraldehyde 3-phosphate and pyruvate: step 1/1. Its function is as follows. Catalyzes the acyloin condensation reaction between C atoms 2 and 3 of pyruvate and glyceraldehyde 3-phosphate to yield 1-deoxy-D-xylulose-5-phosphate (DXP). The protein is 1-deoxy-D-xylulose-5-phosphate synthase of Maricaulis maris (strain MCS10) (Caulobacter maris).